A 346-amino-acid polypeptide reads, in one-letter code: Biotin synthase (346 aa).

Residues 38 to 256 (QQVQVSTLLS…IAVARIMMPT (219 aa)) enclose the Radical SAM core domain. 3 residues coordinate [4Fe-4S] cluster: cysteine 53, cysteine 57, and cysteine 60. Residues cysteine 97, cysteine 128, cysteine 188, and arginine 260 each coordinate [2Fe-2S] cluster.

The protein belongs to the radical SAM superfamily. Biotin synthase family. Homodimer. It depends on [4Fe-4S] cluster as a cofactor. Requires [2Fe-2S] cluster as cofactor.

It carries out the reaction (4R,5S)-dethiobiotin + (sulfur carrier)-SH + 2 reduced [2Fe-2S]-[ferredoxin] + 2 S-adenosyl-L-methionine = (sulfur carrier)-H + biotin + 2 5'-deoxyadenosine + 2 L-methionine + 2 oxidized [2Fe-2S]-[ferredoxin]. It functions in the pathway cofactor biosynthesis; biotin biosynthesis; biotin from 7,8-diaminononanoate: step 2/2. In terms of biological role, catalyzes the conversion of dethiobiotin (DTB) to biotin by the insertion of a sulfur atom into dethiobiotin via a radical-based mechanism. The sequence is that of Biotin synthase from Salmonella dublin (strain CT_02021853).